The chain runs to 304 residues: MAKINLRSIFCHLVNDDKFLSVVVEDDHSTGSSKVKKNSNKNKINIMANMVSEYVTLSPYETQGYALLPHNIKCLLTPDYQRLGINGKMVKHFEPINISFLHSLNILLRPEIYYLNFEEHTKNYSLLEGFLSHMIQRNYQIDKIKNTKKVQAVNKELIKNLSEGKISHDLIQYIVNIFEINLLVFDFAKMDILLYWSKGTKYPYFNLFKDIYCMSYIYGNYEPITCLQNNISEQQKRKMYTYILTNLDNIKTIQQIQLSAPTLLYLSTWDFCVTDIEKIYETFFRNKNSKEILEDVINNSNICN.

This is an uncharacterized protein from Acanthamoeba polyphaga (Amoeba).